The sequence spans 316 residues: NADH-quinone oxidoreductase subunit H (316 aa).

8 helical membrane passes run 6–26 (PAVV…LIWV), 74–94 (FVIA…VVPF), 98–118 (VGVI…SLAV), 145–165 (ISYE…AGSF), 177–197 (GWYV…AVAE), 233–253 (YLGI…GWLG), 256–276 (FLPP…FFIL), and 296–316 (VMLP…LSVP).

This sequence belongs to the complex I subunit 1 family. As to quaternary structure, NDH-1 is composed of 14 different subunits. Subunits NuoA, H, J, K, L, M, N constitute the membrane sector of the complex.

Its subcellular location is the cell inner membrane. The catalysed reaction is a quinone + NADH + 5 H(+)(in) = a quinol + NAD(+) + 4 H(+)(out). Functionally, NDH-1 shuttles electrons from NADH, via FMN and iron-sulfur (Fe-S) centers, to quinones in the respiratory chain. The immediate electron acceptor for the enzyme in this species is believed to be ubiquinone. Couples the redox reaction to proton translocation (for every two electrons transferred, four hydrogen ions are translocated across the cytoplasmic membrane), and thus conserves the redox energy in a proton gradient. This subunit may bind ubiquinone. The chain is NADH-quinone oxidoreductase subunit H from Methylococcus capsulatus (strain ATCC 33009 / NCIMB 11132 / Bath).